Reading from the N-terminus, the 144-residue chain is Transcription antitermination protein NusB (144 aa).

Belongs to the NusB family.

Involved in transcription antitermination. Required for transcription of ribosomal RNA (rRNA) genes. Binds specifically to the boxA antiterminator sequence of the ribosomal RNA (rrn) operons. The polypeptide is Transcription antitermination protein NusB (Histophilus somni (strain 2336) (Haemophilus somnus)).